Here is a 1110-residue protein sequence, read N- to C-terminus: Coiled-coil domain-containing protein 150 (1110 aa).

4 coiled-coil regions span residues 122–250 (LENL…TSAS), 288–313 (QDLLAQEQRKNEDLGMTISQLKSDLN), 413–695 (AAHA…KEDN), and 728–1048 (SEIA…EAHR).

This chain is Coiled-coil domain-containing protein 150 (Ccdc150), found in Mus musculus (Mouse).